Consider the following 270-residue polypeptide: 4-hydroxy-tetrahydrodipicolinate reductase (270 aa).

NAD(+) contacts are provided by residues 11 to 16 and Glu37; that span reads GAGGRM. Arg38 contacts NADP(+). NAD(+) contacts are provided by residues 101 to 103 and 125 to 128; these read GTT and APNM. His158 functions as the Proton donor/acceptor in the catalytic mechanism. His159 provides a ligand contact to (S)-2,3,4,5-tetrahydrodipicolinate. Lys162 serves as the catalytic Proton donor. 168-169 is a (S)-2,3,4,5-tetrahydrodipicolinate binding site; it reads GT.

The protein belongs to the DapB family.

Its subcellular location is the cytoplasm. It carries out the reaction (S)-2,3,4,5-tetrahydrodipicolinate + NAD(+) + H2O = (2S,4S)-4-hydroxy-2,3,4,5-tetrahydrodipicolinate + NADH + H(+). It catalyses the reaction (S)-2,3,4,5-tetrahydrodipicolinate + NADP(+) + H2O = (2S,4S)-4-hydroxy-2,3,4,5-tetrahydrodipicolinate + NADPH + H(+). Its pathway is amino-acid biosynthesis; L-lysine biosynthesis via DAP pathway; (S)-tetrahydrodipicolinate from L-aspartate: step 4/4. In terms of biological role, catalyzes the conversion of 4-hydroxy-tetrahydrodipicolinate (HTPA) to tetrahydrodipicolinate. This is 4-hydroxy-tetrahydrodipicolinate reductase from Shewanella sp. (strain W3-18-1).